Here is a 31-residue protein sequence, read N- to C-terminus: Cytochrome b6-f complex subunit 6 (31 aa).

The helical transmembrane segment at 4 to 26 (LTSYFGFLLAALTITSALFIGLN) threads the bilayer.

It belongs to the PetL family. In terms of assembly, the 4 large subunits of the cytochrome b6-f complex are cytochrome b6, subunit IV (17 kDa polypeptide, PetD), cytochrome f and the Rieske protein, while the 4 small subunits are PetG, PetL, PetM and PetN. The complex functions as a dimer.

It localises to the plastid. It is found in the chloroplast thylakoid membrane. Functionally, component of the cytochrome b6-f complex, which mediates electron transfer between photosystem II (PSII) and photosystem I (PSI), cyclic electron flow around PSI, and state transitions. PetL is important for photoautotrophic growth as well as for electron transfer efficiency and stability of the cytochrome b6-f complex. The sequence is that of Cytochrome b6-f complex subunit 6 from Blitum bonus-henricus (Good King Henry).